Here is a 494-residue protein sequence, read N- to C-terminus: GTPase Der (494 aa).

EngA-type G domains are found at residues 2–164 (KKIA…PEED) and 235–407 (IKIS…KNYS). Residues 8 to 15 (GRPNVGKS), 55 to 59 (DTGGL), 116 to 119 (NKID), 241 to 248 (GRTNVGKS), 288 to 292 (DTAGL), and 352 to 355 (NKWD) contribute to the GTP site. One can recognise a KH-like domain in the interval 408-492 (QHIKTSELNV…PVLFKAKKRG (85 aa)).

It belongs to the TRAFAC class TrmE-Era-EngA-EngB-Septin-like GTPase superfamily. EngA (Der) GTPase family. In terms of assembly, associates with the 50S ribosomal subunit.

Its function is as follows. GTPase that plays an essential role in the late steps of ribosome biogenesis. This Sulfurimonas denitrificans (strain ATCC 33889 / DSM 1251) (Thiomicrospira denitrificans (strain ATCC 33889 / DSM 1251)) protein is GTPase Der.